A 298-amino-acid polypeptide reads, in one-letter code: Probable endonuclease 4 (298 aa).

Zn(2+)-binding residues include H69, H111, E146, D180, H183, H215, D228, H230, and E260.

This sequence belongs to the AP endonuclease 2 family. The cofactor is Zn(2+).

The catalysed reaction is Endonucleolytic cleavage to 5'-phosphooligonucleotide end-products.. In terms of biological role, endonuclease IV plays a role in DNA repair. It cleaves phosphodiester bonds at apurinic or apyrimidinic (AP) sites, generating a 3'-hydroxyl group and a 5'-terminal sugar phosphate. The chain is Probable endonuclease 4 from Bacillus cereus (strain AH820).